Reading from the N-terminus, the 205-residue chain is Low-density lipoprotein receptor class A domain-containing protein 1 (205 aa).

Residues 43–63 (LLLLLATVAALIALVTILGLP) traverse the membrane as a helical segment. Positions 71-114 (ACITLTNRTGFLCHDQRSCIPASGVCDGVRTCTHGEDEDESLCR) constitute an LDL-receptor class A 1 domain. 6 cysteine pairs are disulfide-bonded: Cys-72–Cys-89, Cys-83–Cys-102, Cys-96–Cys-113, Cys-141–Cys-160, Cys-163–Cys-180, and Cys-170–Cys-193. In terms of domain architecture, LDL-receptor class A 2; atypical spans 115–161 (DVPQSLPHFLVAHCGDPASWIYSDQKCDGTNNCGDCSDELSPVTVCP). Residues 162–203 (PCGPGWWRCPSTFFKYCDCIPRHLCRDHVQHCSDWSDEYACP) form the LDL-receptor class A 3; atypical domain.

Belongs to the LDLR family.

The protein localises to the membrane. The polypeptide is Low-density lipoprotein receptor class A domain-containing protein 1 (LDLRAD1) (Homo sapiens (Human)).